Here is a 194-residue protein sequence, read N- to C-terminus: GTP cyclohydrolase 1 (194 aa).

3 residues coordinate Zn(2+): C83, H86, and C155.

This sequence belongs to the GTP cyclohydrolase I family. As to quaternary structure, toroid-shaped homodecamer, composed of two pentamers of five dimers.

It catalyses the reaction GTP + H2O = 7,8-dihydroneopterin 3'-triphosphate + formate + H(+). The protein operates within cofactor biosynthesis; 7,8-dihydroneopterin triphosphate biosynthesis; 7,8-dihydroneopterin triphosphate from GTP: step 1/1. The polypeptide is GTP cyclohydrolase 1 (Streptococcus pyogenes serotype M3 (strain ATCC BAA-595 / MGAS315)).